The primary structure comprises 211 residues: Beta-crystallin B3 (211 aa).

The residue at position 1 (Met-1) is an N-acetylmethionine. N-acetylalanine; in Beta-crystallin B3, N-terminally processed is present on Ala-2. Residues 2–23 (AEQHGAPEQAAAGKSHGDLGGS) are N-terminal arm. 2 consecutive Beta/gamma crystallin 'Greek key' domains span residues 24 to 63 (YKVI…QVES) and 64 to 108 (GPWL…RPLN). A connecting peptide region spans residues 109 to 113 (IDSPH). Beta/gamma crystallin 'Greek key' domains are found at residues 114-155 (HKLH…RAIN) and 156-198 (GTWV…RRIR). The C-terminal arm stretch occupies residues 200 to 211 (QKWHKRGRFPSS).

This sequence belongs to the beta/gamma-crystallin family. In terms of assembly, homo/heterodimer, or complexes of higher-order. The structure of beta-crystallin oligomers seems to be stabilized through interactions between the N-terminal arms.

Crystallins are the dominant structural components of the vertebrate eye lens. This chain is Beta-crystallin B3 (CRYBB3), found in Homo sapiens (Human).